A 394-amino-acid chain; its full sequence is Phenylalanine 4-monooxygenase, chloroplastic (394 aa).

A chloroplast-targeting transit peptide spans Met1–Ala79. Residues Ala75–Ile97 are disordered. Residues His252, His257, and Glu297 each contribute to the Fe cation site.

This sequence belongs to the biopterin-dependent aromatic amino acid hydroxylase family. As to quaternary structure, forms monomers. Requires Fe(2+) as cofactor.

The protein resides in the plastid. It localises to the chloroplast. The catalysed reaction is (6R)-L-erythro-5,6,7,8-tetrahydrobiopterin + L-phenylalanine + O2 = (4aS,6R)-4a-hydroxy-L-erythro-5,6,7,8-tetrahydrobiopterin + L-tyrosine. Functionally, catalyzes the hydroxylation of L-phenylalanine to L-tyrosine. Does not seem to be tetrahydropterin-dependent and shows preference for 10-formyltetrahydrofolate as cosubstrate and electron donor. This Physcomitrium patens (Spreading-leaved earth moss) protein is Phenylalanine 4-monooxygenase, chloroplastic.